The following is a 137-amino-acid chain: Mandibular organ-inhibiting hormone (137 aa).

The first 26 residues, 1–26, serve as a signal peptide directing secretion; the sequence is MTTKCTVMAVVLAACICLQVLPQAYG. Glutamine 63 carries the pyrrolidone carboxylic acid modification. Disulfide bonds link cysteine 69/cysteine 105, cysteine 85/cysteine 101, and cysteine 88/cysteine 114. Position 134 is a valine amide (valine 134).

The protein belongs to the arthropod CHH/MIH/GIH/VIH hormone family. As to expression, produced by the medulla terminalis X-organ in the eyestalks and transported to the sinus gland where it is stored and released.

The protein resides in the secreted. Its function is as follows. Represses the synthesis of methyl farnesoate, the precursor of insect juvenile hormone III in the mandibular organ. Also has hyperglycemic activity. This is Mandibular organ-inhibiting hormone from Libinia emarginata (Portly spider crab).